Here is a 730-residue protein sequence, read N- to C-terminus: Polyribonucleotide nucleotidyltransferase (730 aa).

Positions 494 and 500 each coordinate Mg(2+). A KH domain is found at 561 to 622 (PRIQTIQIDP…EAMNRAIQEI (62 aa)). Positions 642–711 (GKIYTGRVTG…RSGKVRLSRK (70 aa)) constitute an S1 motif domain.

The protein belongs to the polyribonucleotide nucleotidyltransferase family. Requires Mg(2+) as cofactor.

It localises to the cytoplasm. It carries out the reaction RNA(n+1) + phosphate = RNA(n) + a ribonucleoside 5'-diphosphate. Its function is as follows. Involved in mRNA degradation. Catalyzes the phosphorolysis of single-stranded polyribonucleotides processively in the 3'- to 5'-direction. The polypeptide is Polyribonucleotide nucleotidyltransferase (Opitutus terrae (strain DSM 11246 / JCM 15787 / PB90-1)).